Here is a 225-residue protein sequence, read N- to C-terminus: Uracil-DNA glycosylase (225 aa).

Aspartate 65 acts as the Proton acceptor in catalysis.

It belongs to the uracil-DNA glycosylase (UDG) superfamily. UNG family.

It localises to the cytoplasm. It carries out the reaction Hydrolyzes single-stranded DNA or mismatched double-stranded DNA and polynucleotides, releasing free uracil.. In terms of biological role, excises uracil residues from the DNA which can arise as a result of misincorporation of dUMP residues by DNA polymerase or due to deamination of cytosine. The chain is Uracil-DNA glycosylase from Bacillus anthracis (strain A0248).